Reading from the N-terminus, the 295-residue chain is Structure-specific endonuclease subunit SLX1 (295 aa).

A GIY-YIG domain is found at 11–93; the sequence is EFYGVYILQS…QHPKTSRHMA (83 aa). A disordered region spans residues 85-133; the sequence is HPKTSRHMAGGGGSVTATAETAKSAPVAGKSDATSPAKNRRNAAPVARS. The SLX1-type zinc finger occupies 205 to 272; the sequence is CCLCSDAIDY…IPSDVSCSQC (68 aa).

The protein belongs to the SLX1 family. As to quaternary structure, forms a heterodimer with SLX4. A divalent metal cation is required as a cofactor.

The protein localises to the nucleus. Functionally, catalytic subunit of the SLX1-SLX4 structure-specific endonuclease that resolves DNA secondary structures generated during DNA repair and recombination. Has endonuclease activity towards branched DNA substrates, introducing single-strand cuts in duplex DNA close to junctions with ss-DNA. The protein is Structure-specific endonuclease subunit SLX1 of Meyerozyma guilliermondii (strain ATCC 6260 / CBS 566 / DSM 6381 / JCM 1539 / NBRC 10279 / NRRL Y-324) (Yeast).